A 296-amino-acid chain; its full sequence is L-fucono-1,5-lactonase (296 aa).

Belongs to the metallo-dependent hydrolases superfamily. Monomer. Does not require a divalent metal for activity. The purified enzyme contains Zn(2+), but the addition of chelators does not diminish the catalytic activity of the enzyme, indicating that it does not require a divalent cation for substrate turnover. is required as a cofactor.

The catalysed reaction is L-fucono-1,5-lactone + H2O = L-fuconate + H(+). It catalyses the reaction L-fucono-1,4-lactone + H2O = L-fuconate + H(+). The enzyme catalyses D-arabinono-1,4-lactone + H2O = D-arabinonate + H(+). It carries out the reaction L-xylono-1,4-lactone + H2O = L-xylonate + H(+). The catalysed reaction is L-galactono-1,4-lactone + H2O = L-galactonate + H(+). The protein operates within carbohydrate degradation; L-fucose degradation. Functionally, L-fucono-1,5-lactonase involved in an L-fucose degradation pathway. Catalyzes the hydrolysis of L-fucono-1,5-lactone to L-fuconate. L-fucono-1,5-lactone is the best substrate, but the enzyme can also hydrolyze L-fucono-1,4-lactone, L-galactono-1,4-lactone D-arabinono-1,4-lactone and L-xylono-1,4-lactone. In Burkholderia multivorans (strain ATCC 17616 / 249), this protein is L-fucono-1,5-lactonase.